Here is a 443-residue protein sequence, read N- to C-terminus: Glutamate-rich protein 1 (443 aa).

The residue at position 12 (Lys12) is an N6-acetyllysine. The tract at residues 15–333 is disordered; sequence QRLFPPVPSG…DASEEDDTIT (319 aa). The span at 42-54 shows a compositional bias: basic and acidic residues; sequence VTSEKVSQKHAEP. Residues 87-97 are compositionally biased toward polar residues; that stretch reads SCGSPENASSG. Composition is skewed to basic residues over residues 109 to 124 and 159 to 176; these read PKRR…KKFK and KNKK…RKKA. A compositionally biased stretch (acidic residues) spans 205-226; that stretch reads ACEEDGVDTSEEDPTLAGEEDV. Residues Ser238 and Ser254 each carry the phosphoserine modification. Residues 250 to 266 show a composition bias toward acidic residues; the sequence is GADASEEDPTPAGEEDV. Residue Thr277 is modified to Phosphothreonine. The segment covering 281–296 has biased composition (basic and acidic residues); that stretch reads DLTRAGEEDGKDTREE. Positions 297–332 are enriched in acidic residues; it reads DGADASEEDPTWAGEEEGADSGEEDGADASEEDDTI.

The chain is Glutamate-rich protein 1 (ERICH1) from Homo sapiens (Human).